The following is a 662-amino-acid chain: DNA topoisomerase 4 subunit B (662 aa).

Residues Tyr-20, Asn-60, Asp-87, 129-135, and Lys-359 contribute to the ATP site; that span reads GLHGVGI. The 115-residue stretch at 439-553 folds into the Toprim domain; the sequence is TELFIVEGDS…EGHLYLAKPP (115 aa). Mg(2+)-binding residues include Glu-445, Asp-518, and Asp-520.

This sequence belongs to the type II topoisomerase family. ParE type 1 subfamily. As to quaternary structure, heterotetramer composed of ParC and ParE. Mg(2+) serves as cofactor. Mn(2+) is required as a cofactor. It depends on Ca(2+) as a cofactor.

The enzyme catalyses ATP-dependent breakage, passage and rejoining of double-stranded DNA.. Topoisomerase IV is essential for chromosome segregation. It relaxes supercoiled DNA. Performs the decatenation events required during the replication of a circular DNA molecule. This chain is DNA topoisomerase 4 subunit B, found in Rickettsia prowazekii (strain Madrid E).